The following is a 135-amino-acid chain: Protein PsiE homolog (135 aa).

4 helical membrane-spanning segments follow: residues 14-34, 54-74, 82-102, and 107-127; these read LQTILNIGLLVLATILVIFLV, YQLIEGIVIYFLYFEFIALIV, HFPLRYFIYIGITAIIRLIIV, and PSDTLMYSAAILLLVVTLYLA.

Belongs to the PsiE family.

It localises to the cell inner membrane. This chain is Protein PsiE homolog, found in Pectobacterium carotovorum subsp. carotovorum (strain PC1).